Here is a 642-residue protein sequence, read N- to C-terminus: 3D-(3,5/4)-trihydroxycyclohexane-1,2-dione hydrolase (642 aa).

Glu-71 is a thiamine diphosphate binding site. The tract at residues 446–526 (SLPGDVQRIW…INILVFDNSG (81 aa)) is thiamine pyrophosphate binding. Mg(2+)-binding residues include Asp-497 and Asn-524.

It belongs to the TPP enzyme family. It depends on Mg(2+) as a cofactor. Thiamine diphosphate serves as cofactor.

The catalysed reaction is 3D-3,5/4-trihydroxycyclohexane-1,2-dione + H2O = 5-deoxy-D-glucuronate + H(+). Its pathway is polyol metabolism; myo-inositol degradation into acetyl-CoA; acetyl-CoA from myo-inositol: step 3/7. Its function is as follows. Involved in the cleavage of the C1-C2 bond of 3D-(3,5/4)-trihydroxycyclohexane-1,2-dione (THcHDO) to yield 5-deoxy-glucuronate (5DG). The protein is 3D-(3,5/4)-trihydroxycyclohexane-1,2-dione hydrolase of Lacticaseibacillus casei (Lactobacillus casei).